The sequence spans 90 residues: MNIYTFDFDEIESQEDFYRDFSQTFGLAKDKVRDLDSLWDVLMNDVLPLPLEIEFVHLGEKTRRRFGALILLFDEAEEELEGHLRFNVRH.

The protein belongs to the barstar family.

This is an uncharacterized protein from Escherichia coli O157:H7.